The sequence spans 93 residues: DNA-directed RNA polymerase subunit omega (93 aa).

This sequence belongs to the RNA polymerase subunit omega family. As to quaternary structure, the RNAP catalytic core consists of 2 alpha, 1 beta, 1 beta' and 1 omega subunit. When a sigma factor is associated with the core the holoenzyme is formed, which can initiate transcription.

The catalysed reaction is RNA(n) + a ribonucleoside 5'-triphosphate = RNA(n+1) + diphosphate. Promotes RNA polymerase assembly. Latches the N- and C-terminal regions of the beta' subunit thereby facilitating its interaction with the beta and alpha subunits. This Actinobacillus pleuropneumoniae serotype 3 (strain JL03) protein is DNA-directed RNA polymerase subunit omega.